The sequence spans 445 residues: Chromosomal replication initiator protein DnaA (445 aa).

The tract at residues 1-72 (MSGIDTIWEK…QEAFIEEIGE (72 aa)) is domain I, interacts with DnaA modulators. The interval 72–107 (EKLNIKVISSEDELMNNEKEAPVRKTQQTSQELLPN) is domain II. The tract at residues 108-324 (QLNTDNTFDT…GALTRVSAYS (217 aa)) is domain III, AAA+ region. Residues Gly152, Gly154, Lys155, and Thr156 each coordinate ATP. The tract at residues 325–445 (KLVNRELNSD…LKNIEKDITS (121 aa)) is domain IV, binds dsDNA.

The protein belongs to the DnaA family. In terms of assembly, oligomerizes as a right-handed, spiral filament on DNA at oriC.

The protein localises to the cytoplasm. Its function is as follows. Plays an essential role in the initiation and regulation of chromosomal replication. ATP-DnaA binds to the origin of replication (oriC) to initiate formation of the DNA replication initiation complex once per cell cycle. Binds the DnaA box (a 9 base pair repeat at the origin) and separates the double-stranded (ds)DNA. Forms a right-handed helical filament on oriC DNA; dsDNA binds to the exterior of the filament while single-stranded (ss)DNA is stabiized in the filament's interior. The ATP-DnaA-oriC complex binds and stabilizes one strand of the AT-rich DNA unwinding element (DUE), permitting loading of DNA polymerase. After initiation quickly degrades to an ADP-DnaA complex that is not apt for DNA replication. Binds acidic phospholipids. The sequence is that of Chromosomal replication initiator protein DnaA from Macrococcus caseolyticus (strain JCSC5402) (Macrococcoides caseolyticum).